Consider the following 76-residue polypeptide: Large ribosomal subunit protein eL20 (76 aa).

The protein belongs to the eukaryotic ribosomal protein eL20 family. In terms of assembly, part of the 50S ribosomal subunit. Binds 23S rRNA.

The protein is Large ribosomal subunit protein eL20 of Methanococcus maripaludis (strain C7 / ATCC BAA-1331).